A 1019-amino-acid chain; its full sequence is Macrophage colony-stimulating factor 1 receptor 2 (1019 aa).

A signal peptide spans M1–A18. The Extracellular segment spans residues E19–S576. Ig-like C2-type domains lie at Q37 to Y109, I106 to A212, and Q224 to L312. C52 and C92 form a disulfide bridge. Residues N96, N148, N169, N249, N342, N346, N355, N369, N379, N408, N422, N429, N433, and N514 are each glycosylated (N-linked (GlcNAc...) asparagine). 2 cysteine pairs are disulfide-bonded: C139–C193 and C239–C294. Ig-like C2-type domains are found at residues S383–Y474 and T487–L567. C490 and C552 form a disulfide bridge. The helical transmembrane segment at A577–Y597 threads the bilayer. Residues K598–S1019 are Cytoplasmic-facing. Positions Q601–K633 are regulatory juxtamembrane domain. At Y620 the chain carries Phosphotyrosine; by autocatalysis. Residues L641–L963 form the Protein kinase domain. ATP is bound by residues L647–V655 and K674. 2 positions are modified to phosphotyrosine; by autocatalysis: Y756 and Y778. Catalysis depends on D827, which acts as the Proton acceptor. An activation loop region spans residues D845–P867. 2 positions are modified to phosphotyrosine; by autocatalysis: Y858 and Y974. The disordered stretch occupies residues N970–R1001. A compositionally biased stretch (basic and acidic residues) spans E979–R1001. Y1016 bears the Phosphotyrosine; by autocatalysis mark.

It belongs to the protein kinase superfamily. Tyr protein kinase family. CSF-1/PDGF receptor subfamily. As to quaternary structure, monomer. Homodimer. Interacts with CSF1. Autophosphorylated in response to CSF1 binding. autophosphorylation, leading to its degradation. In terms of processing, ubiquitinated. Becomes rapidly polyubiquitinated after autophosphorylation, leading to its degradation.

It localises to the cell membrane. It carries out the reaction L-tyrosyl-[protein] + ATP = O-phospho-L-tyrosyl-[protein] + ADP + H(+). With respect to regulation, present in an inactive conformation in the absence of bound ligand. CSF1 binding leads to dimerization and activation by autophosphorylation on tyrosine residues. Functionally, tyrosine-protein kinase that acts as a cell-surface receptor for CSF1 and plays an essential role in the regulation of survival, proliferation and differentiation of hematopoietic precursor cells, especially mononuclear phagocytes, such as macrophages and monocytes. Plays an important role in innate immunity and in inflammatory processes. Plays an important role in the regulation of osteoclast proliferation and differentiation, the regulation of bone resorption, and is required for normal bone development. Promotes reorganization of the actin cytoskeleton, regulates formation of membrane ruffles, cell adhesion and cell migration. Activates several signaling pathways in response to ligand binding. This is Macrophage colony-stimulating factor 1 receptor 2 (csf1r2) from Takifugu rubripes (Japanese pufferfish).